An 855-amino-acid chain; its full sequence is MSEARRDSTSSLQRKKPPWLKLDIPSAVPLTAEEPSFLQPLRRQAFLRSVSMPAETAHISSPHHELRRPVLQRQTSITQTIRRGTADWFGVSKDSDSTQKWQRKSIRHCSQRYGKLKPQVLRELDLPSQDNVSLTSTETPPPLYVGPCQLGMQKIIDPLARGRAFRVADDTAEGLSAPHTPVTPGAASLCSFSSSRSGFHRLPRRRKRESVAKMSFRAAAALMKGRSVRDGTFRRAQRRSFTPASFLEEDTTDFPDELDTSFFAREGILHEELSTYPDEVFESPSEAALKDWEKAPEQADLTGGALDRSELERSHLMLPLERGWRKQKEGAAAPQPKVRLRQEVVSTAGPRRGQRIAVPVRKLFAREKRPYGLGMVGRLTNRTYRKRIDSFVKRQIEDMDDHRPFFTYWLTFVHSLVTILAVCIYGIAPVGFSQHETVDSVLRNRGVYENVKYVQQENFWIGPSSEALIHLGAKFSPCMRQDPQVHSFIRSAREREKHSACCVRNDRSGCVQTSEEECSSTLAVWVKWPIHPSAPELAGHKRQFGSVCHQDPRVCDEPSSEDPHEWPEDITKWPICTKNSAGNHTNHPHMDCVITGRPCCIGTKGRCEITSREYCDFMRGYFHEEATLCSQVHCMDDVCGLLPFLNPEVPDQFYRLWLSLFLHAGILHCLVSICFQMTVLRDLEKLAGWHRIAIIYLLSGVTGNLASAIFLPYRAEVGPAGSQFGILACLFVELFQSWQILARPWRAFFKLLAVVLFLFTFGLLPWIDNFAHISGFISGLFLSFAFLPYISFGKFDLYRKRCQIIIFQVVFLGLLAGLVVLFYVYPVRCEWCEFLTCIPFTDKFCEKYELDAQLH.

At 1-411 (MSEARRDSTS…HRPFFTYWLT (411 aa)) the chain is on the cytoplasmic side. A phosphoserine mark is found at Ser76 and Ser176. Phosphothreonine is present on residues Thr180 and Thr183. Residue Ser390 is modified to Phosphoserine. A helical membrane pass occupies residues 412 to 432 (FVHSLVTILAVCIYGIAPVGF). Over 433-655 (SQHETVDSVL…NPEVPDQFYR (223 aa)) the chain is Lumenal. Residue Asn583 is glycosylated (N-linked (GlcNAc...) asparagine). The helical transmembrane segment at 656–676 (LWLSLFLHAGILHCLVSICFQ) threads the bilayer. At 677 to 691 (MTVLRDLEKLAGWHR) the chain is on the cytoplasmic side. The chain crosses the membrane as a helical span at residues 692 to 712 (IAIIYLLSGVTGNLASAIFLP). Over 713–714 (YR) the chain is Lumenal. The helical transmembrane segment at 715–735 (AEVGPAGSQFGILACLFVELF) threads the bilayer. The Cytoplasmic portion of the chain corresponds to 736-746 (QSWQILARPWR). A helical transmembrane segment spans residues 747-767 (AFFKLLAVVLFLFTFGLLPWI). Over 768–772 (DNFAH) the chain is Lumenal. Residues 773 to 793 (ISGFISGLFLSFAFLPYISFG) traverse the membrane as a helical segment. At 794–803 (KFDLYRKRCQ) the chain is on the cytoplasmic side. A helical transmembrane segment spans residues 804–824 (IIIFQVVFLGLLAGLVVLFYV). Residues 825 to 855 (YPVRCEWCEFLTCIPFTDKFCEKYELDAQLH) are Lumenal-facing.

It belongs to the peptidase S54 family. Homodimer, or homooligomer. Interacts with TGFA and HBEGF. Interacts with EGF; may retain EGF in the endoplasmic reticulum and regulates its degradation through the endoplasmic reticulum-associated degradation (ERAD). Interacts (via cytoplasmic N-terminus) with FRMD8/iTAP; this interaction leads to mutual protein stabilization. Interacts with ADAM17/TACE. N-glycosylated. In terms of tissue distribution, highly expressed in cerebellum, cerebrum, heart, skeletal muscle, placenta, pancreatic islet and testis. Detected at lower levels in colon, kidney, small intestine and lung.

It is found in the endoplasmic reticulum membrane. The protein localises to the golgi apparatus membrane. Its function is as follows. Regulates ADAM17 protease, a sheddase of the epidermal growth factor (EGF) receptor ligands and TNF, thereby plays a role in sleep, cell survival, proliferation, migration and inflammation. Does not exhibit any protease activity on its own. This chain is Inactive rhomboid protein 1 (RHBDF1), found in Homo sapiens (Human).